The following is a 156-amino-acid chain: Transcriptional regulator MraZ (156 aa).

SpoVT-AbrB domains follow at residues 7–64 (KERH…EPSV) and 93–136 (LEMV…EPAR).

It belongs to the MraZ family. As to quaternary structure, forms oligomers.

The protein localises to the cytoplasm. It is found in the nucleoid. The polypeptide is Transcriptional regulator MraZ (Chlorobium phaeovibrioides (strain DSM 265 / 1930) (Prosthecochloris vibrioformis (strain DSM 265))).